Consider the following 1064-residue polypeptide: Leucine--tRNA ligase (1064 aa).

Residues 1–25 (MARAMSETAEPGARTGAADTTVAPT) are disordered. Positions 106–117 (PYPSGSGLHVGH) match the 'HIGH' region motif. Residues 435-456 (GRPGGGTEPADTAGPEAGADPA) are disordered. Positions 831 to 835 (KMGKS) match the 'KMSKS' region motif. Residue K834 coordinates ATP.

The protein belongs to the class-I aminoacyl-tRNA synthetase family.

It is found in the cytoplasm. It carries out the reaction tRNA(Leu) + L-leucine + ATP = L-leucyl-tRNA(Leu) + AMP + diphosphate. The protein is Leucine--tRNA ligase of Frankia casuarinae (strain DSM 45818 / CECT 9043 / HFP020203 / CcI3).